We begin with the raw amino-acid sequence, 796 residues long: Polyribonucleotide nucleotidyltransferase (796 aa).

Aspartate 490 and aspartate 496 together coordinate Mg(2+). One can recognise a KH domain in the interval 557-616 (PRIESIFINKDKIRNVIGSGGKNIRDICEKTGAKIEIIQDGTVMIYAVNNEAVEYAKSMI). The S1 motif domain maps to 626 to 693 (GKVFEGTVVE…DREHIQLSMR (68 aa)). Composition is skewed to low complexity over residues 717 to 728 (DDSCGSTGGSSF), 747 to 759 (GGSSRSSRRNSNG), and 769 to 784 (SSNGFGNNNRSFSNSR). The tract at residues 717–796 (DDSCGSTGGS…HDVPRKPRFF (80 aa)) is disordered. A compositionally biased stretch (basic and acidic residues) spans 785–796 (NGHDVPRKPRFF).

Belongs to the polyribonucleotide nucleotidyltransferase family. It depends on Mg(2+) as a cofactor.

It localises to the cytoplasm. The catalysed reaction is RNA(n+1) + phosphate = RNA(n) + a ribonucleoside 5'-diphosphate. In terms of biological role, involved in mRNA degradation. Catalyzes the phosphorolysis of single-stranded polyribonucleotides processively in the 3'- to 5'-direction. The sequence is that of Polyribonucleotide nucleotidyltransferase from Ehrlichia chaffeensis (strain ATCC CRL-10679 / Arkansas).